Reading from the N-terminus, the 181-residue chain is Monofunctional chorismate mutase (181 aa).

The signal sequence occupies residues 1–20 (MIRHIAIFLCSLLMCSTTFA). A Chorismate mutase domain is found at 21 to 102 (DSVTSVSLGA…ASKAIQYRYL (82 aa)). Residues R38, K49, D58, E62, and Q98 each contribute to the substrate site.

It localises to the periplasm. The enzyme catalyses chorismate = prephenate. Its pathway is metabolic intermediate biosynthesis; prephenate biosynthesis; prephenate from chorismate: step 1/1. In terms of biological role, catalyzes the Claisen rearrangement of chorismate to prephenate. The sequence is that of Monofunctional chorismate mutase from Salmonella typhimurium.